Here is a 647-residue protein sequence, read N- to C-terminus: Protein INVOLVED IN DE NOVO 2 (647 aa).

2 disordered regions span residues 1–20 (MGSTVILSSDDEDSDISESE) and 101–123 (SASEAEPSSKRQKNGNPIQDCDH). Acidic residues predominate over residues 9–20 (SDDEDSDISESE). Residues 253-508 (IAELTEEEAR…NIMKEWNTNI (256 aa)) adopt a coiled-coil conformation.

As to quaternary structure, interacts with FMD1/IDNL1. Forms a complex with FMD1/IDNL1 and FMD2/INDL2. Can form homodimers. Interacts with MORC6.

In terms of biological role, forms a complex with FDM1/IDNL1 and FDM2/IDNL2 that is required for RNA-directed DNA methylation (RdDM) and that functions at a downstream step of the RdDM pathway and downstream of small interfering RNA (siRNA) formation. Required for de novo DNA methylation, siRNA accumulation and siRNA-mediated maintenance methylation. Required for several post-transcriptional gene silencing pathways. Binds double-stranded RNAs (dsRNAs) with 5'-overhangs through its XS domain. Binds long non-coding RNA (lncRNA) in an AGO4-dependent manner and associates with DRM2, resulting in DNA methylation of RdDM target loci. Mediates the silencing of a subset of MORC6 target loci. In Arabidopsis thaliana (Mouse-ear cress), this protein is Protein INVOLVED IN DE NOVO 2.